Consider the following 224-residue polypeptide: tRNA pseudouridine synthase B (224 aa).

Catalysis depends on D46, which acts as the Nucleophile.

Belongs to the pseudouridine synthase TruB family. Type 1 subfamily.

It catalyses the reaction uridine(55) in tRNA = pseudouridine(55) in tRNA. In terms of biological role, responsible for synthesis of pseudouridine from uracil-55 in the psi GC loop of transfer RNAs. In Methylococcus capsulatus (strain ATCC 33009 / NCIMB 11132 / Bath), this protein is tRNA pseudouridine synthase B.